The chain runs to 205 residues: Small ribosomal subunit protein uS4 (205 aa).

Residues 20–46 form a disordered region; the sequence is WGRSKSPVNRREYGPGQHGQRRKGKLS. One can recognise an S4 RNA-binding domain in the interval 94 to 157; sequence RRLDAVVYRA…RQLTLVLEAS (64 aa).

The protein belongs to the universal ribosomal protein uS4 family. As to quaternary structure, part of the 30S ribosomal subunit. Contacts protein S5. The interaction surface between S4 and S5 is involved in control of translational fidelity.

In terms of biological role, one of the primary rRNA binding proteins, it binds directly to 16S rRNA where it nucleates assembly of the body of the 30S subunit. Its function is as follows. With S5 and S12 plays an important role in translational accuracy. The protein is Small ribosomal subunit protein uS4 of Beijerinckia indica subsp. indica (strain ATCC 9039 / DSM 1715 / NCIMB 8712).